Reading from the N-terminus, the 201-residue chain is Large ribosomal subunit protein bL25 (201 aa).

This sequence belongs to the bacterial ribosomal protein bL25 family. CTC subfamily. As to quaternary structure, part of the 50S ribosomal subunit; part of the 5S rRNA/L5/L18/L25 subcomplex. Contacts the 5S rRNA. Binds to the 5S rRNA independently of L5 and L18.

This is one of the proteins that binds to the 5S RNA in the ribosome where it forms part of the central protuberance. The protein is Large ribosomal subunit protein bL25 of Akkermansia muciniphila (strain ATCC BAA-835 / DSM 22959 / JCM 33894 / BCRC 81048 / CCUG 64013 / CIP 107961 / Muc).